Here is a 236-residue protein sequence, read N- to C-terminus: Lectin CPL (236 aa).

Glu-8 and Asp-10 together coordinate Mn(2+). Asp-10, Tyr-12, Asn-14, and Asp-19 together coordinate Ca(2+). Residue Asn-14 coordinates a carbohydrate. Residues Asp-19 and His-24 each contribute to the Mn(2+) site. Residues 99–100 (VY), Asp-207, and Arg-227 each bind a carbohydrate.

This sequence belongs to the leguminous lectin family. In terms of assembly, homotetramer; dimer of dimers. Post-translationally, concanavalin A-like lectins of the Diocleinae subtribe undergo proteolytic processing referred to as circular permutation. The propeptide is split into an N-terminal and a C-terminal part, the gamma and beta chain, respectively. These are then religated in beta-gamma order to form the mature alpha chain. The beta and gamma chains can often be detected in cell extracts. Residues 1-118 of the mature chain, as displayed here, probably constitute the beta chain in the propeptide, residues 119-236 the gamma chain.

In terms of biological role, D-mannose/D-glucose-binding lectin that also binds derivative alpha-methyl-D-mannppyranoside. Has hemagglutinating activity towards rabbit erythrocytes. This Bionia pedicellata (Camptosema pedicellatum) protein is Lectin CPL.